Reading from the N-terminus, the 428-residue chain is Serine--tRNA ligase (428 aa).

231-233 (TAE) contributes to the L-serine binding site. ATP-binding positions include 262 to 264 (RRE) and V278. E285 provides a ligand contact to L-serine. 349 to 352 (EVSS) is an ATP binding site. An L-serine-binding site is contributed by S384.

Belongs to the class-II aminoacyl-tRNA synthetase family. Type-1 seryl-tRNA synthetase subfamily. In terms of assembly, homodimer. The tRNA molecule binds across the dimer.

The protein resides in the cytoplasm. The catalysed reaction is tRNA(Ser) + L-serine + ATP = L-seryl-tRNA(Ser) + AMP + diphosphate + H(+). It catalyses the reaction tRNA(Sec) + L-serine + ATP = L-seryl-tRNA(Sec) + AMP + diphosphate + H(+). It functions in the pathway aminoacyl-tRNA biosynthesis; selenocysteinyl-tRNA(Sec) biosynthesis; L-seryl-tRNA(Sec) from L-serine and tRNA(Sec): step 1/1. Catalyzes the attachment of serine to tRNA(Ser). Is also able to aminoacylate tRNA(Sec) with serine, to form the misacylated tRNA L-seryl-tRNA(Sec), which will be further converted into selenocysteinyl-tRNA(Sec). The sequence is that of Serine--tRNA ligase from Chlamydia muridarum (strain MoPn / Nigg).